The primary structure comprises 917 residues: Envelope glycoprotein B (917 aa).

Positions 1–22 (MAISRRSLHAIILTVLLLAATA) are cleaved as a signal peptide. A compositionally biased stretch (low complexity) spans 21-30 (TAAPSQSGSR). Residues 21–117 (TAAPSQSGSR…SGNASEPADP (97 aa)) are disordered. Topologically, residues 23–792 (APSQSGSRSR…SGVSSFLSNP (770 aa)) are virion surface. Over residues 38 to 49 (ERQSTNRGRDNN) the composition is skewed to basic and acidic residues. N-linked (GlcNAc...) asparagine; by host glycosylation is found at Asn48, Asn110, and Asn164. 5 disulfide bridges follow: Cys139–Cys591, Cys156–Cys547, Cys230–Cys294, Cys387–Cys435, and Cys614–Cys651. Involved in fusion and/or binding to host membrane stretches follow at residues 196–202 (VWSGYSY) and 281–288 (GSAWIHRH). 3 N-linked (GlcNAc...) asparagine; by host glycosylation sites follow: Asn421, Asn453, and Asn505. Residue Asn692 is glycosylated (N-linked (GlcNAc...) asparagine; by host). The interval 737-790 (IDTVIKADPNAAIFAGLHGFFEGLGDVGRAVGRVVLGVVGGVVATVSGVSSFLS) is hydrophobic membrane proximal region. Residues 793–813 (FGALAIGLLVLGGLVAAFFAF) form a helical membrane-spanning segment. Over 814-917 (RYVMRLQRNP…EALPETDEDI (104 aa)) the chain is Intravirion. Positions 865-868 (YMAL) match the Golgi targeting motif. An Internalization motif motif is present at residues 907–910 (YEAL).

The protein belongs to the herpesviridae glycoprotein B family. As to quaternary structure, homotrimer; disulfide-linked. Binds to heparan sulfate proteoglycans. Interacts with gH/gL heterodimer. In terms of processing, a proteolytic cleavage by host furin generates two subunits that remain linked by disulfide bonds.

The protein localises to the virion membrane. The protein resides in the host cell membrane. Its subcellular location is the host endosome membrane. It is found in the host Golgi apparatus membrane. In terms of biological role, envelope glycoprotein that forms spikes at the surface of virion envelope. Essential for the initial attachment to heparan sulfate moieties of the host cell surface proteoglycans. Involved in fusion of viral and cellular membranes leading to virus entry into the host cell. Following initial binding to its host receptors, membrane fusion is mediated by the fusion machinery composed at least of gB and the heterodimer gH/gL. May be involved in the fusion between the virion envelope and the outer nuclear membrane during virion egress. The polypeptide is Envelope glycoprotein B (Bovine herpesvirus 2 (strain BMV) (BoHV-2)).